The chain runs to 357 residues: uncharacterized protein (357 aa).

Residues 120 to 145 (SSSTVNHDQPAEQPSDKSTDDSTGYP) form a disordered region.

This is an uncharacterized protein from Caenorhabditis elegans.